A 2506-amino-acid polypeptide reads, in one-letter code: MQPHNPYVEPIAIVGMACRLPGDVVSPSKLWDLLVQERSAQSKVPANRFNVDSWYHPDKQRPGSITTRGGYFLSQDDSFRQFDPSFFGINPKEAASMDPQQRKLLEVVYESFEAAGARLEDVSGSKTACYVGNFTWDIGQMQARDINHGAPYHMTGGGLTILSNRINYVFNLKGPSMTIDTACSSTMYALHLACRSLQAGDCSAAVVAGTNLIFGIEQQIGSVRLGVLSPTSVCHTFDESADGYARAEAVGSLYLKTLSQAIADGDPIRAVIRGTAINANGRSPGISHPSAQEQEMVIRQAYARAGLRLDQTGYFECHGTGTPVGDPLEVSAIGNVFGPVRSAESPLLIGSVKTNLGHGEAASAISSLIKTALCLEKGEIPATIGIKRLNPALNLRDGRLKIVQTLSPWPDSQQYRRASVNSFGYGGANAHAILDAVQSYLGEFCQSIPASLTTPGQPSLKRYFLLPFSAHSESTLRQNIKSISHSFKCDVNLPDLAYTLASCRSNHSERAFALVAGDSSCSKLVDSLASDKLTFGTAMGAVPKLAFIFTGQGAQWPQMGHELVQHYAVVRQTLRDLGNVIAKLPNPPEWDLLDALDQPKSKSRVNEAELSQPLTTAIQIAIVNLLRSWGVHPTAVVGHSSGEIAAAYSAGLISAAEAIIIAYQRGAATVKSTQRGAMLAVGIGSDEALQAIHDIPDIGIACYNAPDSVTLSGTEEAVDMARGRFSRAGVFNRKLITSGNAYHSKLMAEAGQFYEASLKQCLLPNDPPSTGNADITMFSSVTEEPVSTLALEYWRQNLESPVHFDQATQKLLKARPEVNLVVEIGPHSALAAPLKAIRAAVGYSPERLVYLSALKRNSDSVECLLKMVGSLFLSGLPFALSTVNADATVHRDDKTGSEMIQYSHGSFIRDLPTYQWVYDEEPLWNESRLSTDIRFRSYPHHDLLGSRLPGTSNIAPAWRNMISLESVPWLRDHRVGDDIVFPAAGYVTLAIEAITQIRRSTISAVTDAYTLPAYEFAVSTFVNGTWTQHATGSVQVDNDSASDQSISSVENMAGSRGGINKDSYDRRWYGAMDKVGLIYGPGFKTLSDIRASPEHHWATAEVSGNATDKLMGRQSQYILHPTTIDACLQLSIIAAHHGKPESLKKVYLPVLIPKLTIWPHHSSQGLPLTACGRGLHRGLRSVQTFTGLSNPNHQTILQAEISFSSLETAVGENGTGKSPQPYTRLVWKPDLDRMTNTQAQILFHGTQDDISTSKHFFSRLEEVTRLAIRSSAERLPENLQADRLPGHMQKFLEWLKMEGLALSTNEAADGLTGESLLDKIDAIARSVEQTVPEAAMVAQLNSRMPEILAGTVGALDVMVEDNLMSRIYEEGFGQTGAYAKLSDVIDLVAHKDPRLRILELGAGTGGATKPMLKALHGDTPLPKYEKYDFTDVSKAFLGVAQDKFQGYRNLDFGILDIEKDPVAQGFPEQSYDIVFASNVIHATRNVASSLRNCKRLLKPDGKLLIIETTKQRQVTGFMLGALPGYWLGADDGRPSSPFLSKTLWHQRLLDAGLSGADIVLDDYPEPADCTTLIMSRNSSEAANHASMNGANHTNGANSINNISEINGVTGVNQLNGAKSLKPSTVTLIYRREPQPLQRALEAKYAQLGISTRSMALEDIPNSLERDSRTIMLAELEDPLMARMTPAEMHAVQRYTQQAATAIWVTNGNVLRGQDPEKSLVFGLAKSIMTEQPSFHLCSVDVDIGDGKADCGNSTTLLVETEMAFHHDPNGELDTELVEKDGLVYISRYVTDDTENANFERYFAIKPTVMALARGESSYYSLQFENVGRVDSFYFKEQSLKPLGENEVLLDVDAAPLDSLSIAALKGQIASPCFGLEIVGTVRAVGSKTSKLKEGNRIHPVVTSLHVVELLLGLHAGDQILVDCRQAHLACIISQVALLEGSRVYVTFDSEAGRDILQQLGNDSHLVDRQANFKQALLGTSFDAIVTDSTDSYQLFDNIINSGGRIVALANTAPVEMVNAAVSFLNKSVTIGMFDPFNGFATAPVQHSSLLAKALKLLRRNVIRPIPSTQYDLSYLPEAVGHISQDDYVGRVVLTRTPNTAVPIHTVAEPLMFNSEASYLLIGCLGGLGRSLTTWMVSRGARHFIFLSRSGADKPEAAALVKELHELTRAQYLDLTVQVVRGDVSIRDDVSRAISCATKPIKGVVQAAMVLKDTLFTEMSLAQFNQVLHPKMLGTIHLHELLQGHDLDFFVMTSSVLGAIGAAMQSNYSAANAYLDHMARHRQSLGLQATSIALGMILNVGHVEEHPEVEKALKRNGMYGISVDEYLLMMEFACRRRDLSSTTNSHDPYKYDPCATAHIVTGMDPTRVSRAGGKSLWLKDNRLRNLVAALGGGNNGDGFNAEQSAGPSTHELLEAARAEGGVAAVKVTTLGLILARFSKLVLLPVHKIDPGKALAHYGMDSMISAELKSWAWKEFTVDLPFLGLLDQSLTFDDLAEKVVALAETKST.

The region spanning 8–436 (VEPIAIVGMA…GANAHAILDA (429 aa)) is the Ketosynthase family 3 (KS3) domain. Active-site for beta-ketoacyl synthase activity residues include Cys183, His318, and His358. One can recognise a Malonyl-CoA:ACP transacylase (MAT) domain in the interval 547-875 (FIFTGQGAQW…KMVGSLFLSG (329 aa)). Residues 941-1050 (HDLLGSRLPG…ASDQSISSVE (110 aa)) form an N-terminal hotdog fold region. In terms of domain architecture, PKS/mFAS DH spans 941 to 1212 (HDLLGSRLPG…FSSLETAVGE (272 aa)). The Proton acceptor; for dehydratase activity role is filled by His973. The C-terminal hotdog fold stretch occupies residues 1060 to 1212 (NKDSYDRRWY…FSSLETAVGE (153 aa)). The Proton donor; for dehydratase activity role is filled by Asp1125. The interval 1263–1563 (VTRLAIRSSA…SGADIVLDDY (301 aa)) is methyltransferase (CMet) domain. Residues 1827-2093 (GRVDSFYFKE…QDDYVGRVVL (267 aa)) enclose the Enoyl reductase (ER) domain. Positions 2116–2296 (ASYLLIGCLG…QATSIALGMI (181 aa)) constitute a Ketoreductase (KR) domain. Positions 2423–2501 (AVKVTTLGLI…DLAEKVVALA (79 aa)) constitute a Carrier domain. The residue at position 2460 (Ser2460) is an O-(pantetheine 4'-phosphoryl)serine.

Pantetheine 4'-phosphate serves as cofactor.

The protein operates within antifungal biosynthesis. Its function is as follows. Highly reducing polyketide synthase; part of the gene cluster that mediates the biosynthesis of the tetrahydropyranyl antifungal agent restricticin that acts as an inhibitor of CYP51 and blocks the ergosterol biosynthesis. The highly reducing polyketide synthase rstn3, the short chain dehydrogenase rstn4, the cyclase rstn5, the FAD-dependent monooxygenase rstn6 and the enoylreductase rstn7 are required to generate the first stable intermediate desmethylrestrictinol. Rstn3 with rstn7 biosynthesize the first polyketide chain intermediate that is reduced by rstn4, followed by epoxidation by rstn6 before 6-endo cyclization via epoxide opening by rstn5 leads to desmethylrestrictinol. The methyltransferase rstn1 then catalyzes the C4 O-methylation of desmethylrestrictinol to produce restrictinol, and the nonribosomal peptide synthetase rstn8 catalyzes the C3 esterification of restrictinol with glycine that leads to restricticin. The protein is Highly reducing polyketide synthase rstn3 of Aspergillus nomiae NRRL (strain ATCC 15546 / NRRL 13137 / CBS 260.88 / M93).